A 282-amino-acid polypeptide reads, in one-letter code: 4-hydroxy-3-methylbut-2-enyl diphosphate reductase (282 aa).

Cys-14 contacts [4Fe-4S] cluster. Residues His-43 and His-78 each coordinate (2E)-4-hydroxy-3-methylbut-2-enyl diphosphate. The dimethylallyl diphosphate site is built by His-43 and His-78. Residues His-43 and His-78 each contribute to the isopentenyl diphosphate site. Cys-100 provides a ligand contact to [4Fe-4S] cluster. His-128 serves as a coordination point for (2E)-4-hydroxy-3-methylbut-2-enyl diphosphate. His-128 provides a ligand contact to dimethylallyl diphosphate. Residue His-128 coordinates isopentenyl diphosphate. Glu-130 acts as the Proton donor in catalysis. Thr-164 provides a ligand contact to (2E)-4-hydroxy-3-methylbut-2-enyl diphosphate. Cys-192 contributes to the [4Fe-4S] cluster binding site. Positions 220, 221, 222, and 266 each coordinate (2E)-4-hydroxy-3-methylbut-2-enyl diphosphate. 4 residues coordinate dimethylallyl diphosphate: Ser-220, Ser-221, Asn-222, and Ser-266. Isopentenyl diphosphate contacts are provided by Ser-220, Ser-221, Asn-222, and Ser-266.

Belongs to the IspH family. Requires [4Fe-4S] cluster as cofactor.

The enzyme catalyses isopentenyl diphosphate + 2 oxidized [2Fe-2S]-[ferredoxin] + H2O = (2E)-4-hydroxy-3-methylbut-2-enyl diphosphate + 2 reduced [2Fe-2S]-[ferredoxin] + 2 H(+). It catalyses the reaction dimethylallyl diphosphate + 2 oxidized [2Fe-2S]-[ferredoxin] + H2O = (2E)-4-hydroxy-3-methylbut-2-enyl diphosphate + 2 reduced [2Fe-2S]-[ferredoxin] + 2 H(+). Its pathway is isoprenoid biosynthesis; dimethylallyl diphosphate biosynthesis; dimethylallyl diphosphate from (2E)-4-hydroxy-3-methylbutenyl diphosphate: step 1/1. It participates in isoprenoid biosynthesis; isopentenyl diphosphate biosynthesis via DXP pathway; isopentenyl diphosphate from 1-deoxy-D-xylulose 5-phosphate: step 6/6. Catalyzes the conversion of 1-hydroxy-2-methyl-2-(E)-butenyl 4-diphosphate (HMBPP) into a mixture of isopentenyl diphosphate (IPP) and dimethylallyl diphosphate (DMAPP). Acts in the terminal step of the DOXP/MEP pathway for isoprenoid precursor biosynthesis. The protein is 4-hydroxy-3-methylbut-2-enyl diphosphate reductase of Clostridium perfringens (strain SM101 / Type A).